A 364-amino-acid polypeptide reads, in one-letter code: tRNA 2-selenouridine synthase (364 aa).

Residues 14–137 (LIADTPIIDV…LRQTAIQATI (124 aa)) form the Rhodanese domain. The S-selanylcysteine intermediate role is filled by Cys-97.

It belongs to the SelU family. Monomer.

It carries out the reaction 5-methylaminomethyl-2-thiouridine(34) in tRNA + selenophosphate + (2E)-geranyl diphosphate + H2O + H(+) = 5-methylaminomethyl-2-selenouridine(34) in tRNA + (2E)-thiogeraniol + phosphate + diphosphate. The enzyme catalyses 5-methylaminomethyl-2-thiouridine(34) in tRNA + (2E)-geranyl diphosphate = 5-methylaminomethyl-S-(2E)-geranyl-thiouridine(34) in tRNA + diphosphate. The catalysed reaction is 5-methylaminomethyl-S-(2E)-geranyl-thiouridine(34) in tRNA + selenophosphate + H(+) = 5-methylaminomethyl-2-(Se-phospho)selenouridine(34) in tRNA + (2E)-thiogeraniol. It catalyses the reaction 5-methylaminomethyl-2-(Se-phospho)selenouridine(34) in tRNA + H2O = 5-methylaminomethyl-2-selenouridine(34) in tRNA + phosphate. Functionally, involved in the post-transcriptional modification of the uridine at the wobble position (U34) of tRNA(Lys), tRNA(Glu) and tRNA(Gln). Catalyzes the conversion of 2-thiouridine (S2U-RNA) to 2-selenouridine (Se2U-RNA). Acts in a two-step process involving geranylation of 2-thiouridine (S2U) to S-geranyl-2-thiouridine (geS2U) and subsequent selenation of the latter derivative to 2-selenouridine (Se2U) in the tRNA chain. The sequence is that of tRNA 2-selenouridine synthase from Escherichia fergusonii (strain ATCC 35469 / DSM 13698 / CCUG 18766 / IAM 14443 / JCM 21226 / LMG 7866 / NBRC 102419 / NCTC 12128 / CDC 0568-73).